A 240-amino-acid chain; its full sequence is Endonuclease V (240 aa).

The Mg(2+) site is built by D46 and D116.

It belongs to the endonuclease V family. Requires Mg(2+) as cofactor.

Its subcellular location is the cytoplasm. The catalysed reaction is Endonucleolytic cleavage at apurinic or apyrimidinic sites to products with a 5'-phosphate.. DNA repair enzyme involved in the repair of deaminated bases. Selectively cleaves double-stranded DNA at the second phosphodiester bond 3' to a deoxyinosine leaving behind the intact lesion on the nicked DNA. The sequence is that of Endonuclease V from Rhodospirillum centenum (strain ATCC 51521 / SW).